The sequence spans 261 residues: 22 kDa alpha-zein 8b (261 aa).

The first 16 residues, 1–16, serve as a signal peptide directing secretion; it reads LALLALLALFVSATNA.

This sequence belongs to the zein family.

Functionally, zeins are major seed storage proteins. This Zea mays (Maize) protein is 22 kDa alpha-zein 8b.